Consider the following 192-residue polypeptide: dTTP/UTP pyrophosphatase (192 aa).

Residue D71 is the Proton acceptor of the active site.

It belongs to the Maf family. YhdE subfamily. Requires a divalent metal cation as cofactor.

It is found in the cytoplasm. It carries out the reaction dTTP + H2O = dTMP + diphosphate + H(+). It catalyses the reaction UTP + H2O = UMP + diphosphate + H(+). Nucleoside triphosphate pyrophosphatase that hydrolyzes dTTP and UTP. May have a dual role in cell division arrest and in preventing the incorporation of modified nucleotides into cellular nucleic acids. This is dTTP/UTP pyrophosphatase from Clostridium kluyveri (strain NBRC 12016).